A 445-amino-acid chain; its full sequence is Histidinol dehydrogenase (445 aa).

NAD(+) contacts are provided by Tyr144, Gln205, and Asn228. Positions 251, 273, and 276 each coordinate substrate. The Zn(2+) site is built by Gln273 and His276. Catalysis depends on proton acceptor residues Glu341 and His342. 4 residues coordinate substrate: His342, Asp375, Glu429, and His434. Asp375 contacts Zn(2+). His434 contributes to the Zn(2+) binding site.

Belongs to the histidinol dehydrogenase family. The cofactor is Zn(2+).

It carries out the reaction L-histidinol + 2 NAD(+) + H2O = L-histidine + 2 NADH + 3 H(+). It functions in the pathway amino-acid biosynthesis; L-histidine biosynthesis; L-histidine from 5-phospho-alpha-D-ribose 1-diphosphate: step 9/9. Functionally, catalyzes the sequential NAD-dependent oxidations of L-histidinol to L-histidinaldehyde and then to L-histidine. This is Histidinol dehydrogenase from Cupriavidus pinatubonensis (strain JMP 134 / LMG 1197) (Cupriavidus necator (strain JMP 134)).